Consider the following 146-residue polypeptide: FAD synthase (146 aa).

Residues 9-10 (TF), 14-17 (HPGH), and Asp92 each bind ATP.

The protein belongs to the archaeal FAD synthase family. Homodimer. A divalent metal cation serves as cofactor.

It carries out the reaction FMN + ATP + H(+) = FAD + diphosphate. It participates in cofactor biosynthesis; FAD biosynthesis; FAD from FMN: step 1/1. Catalyzes the transfer of the AMP portion of ATP to flavin mononucleotide (FMN) to produce flavin adenine dinucleotide (FAD) coenzyme. This chain is FAD synthase, found in Halobacterium salinarum (strain ATCC 29341 / DSM 671 / R1).